The chain runs to 156 residues: Small ribosomal subunit protein uS7 (156 aa).

The protein belongs to the universal ribosomal protein uS7 family. As to quaternary structure, part of the 30S ribosomal subunit. Contacts proteins S9 and S11.

Functionally, one of the primary rRNA binding proteins, it binds directly to 16S rRNA where it nucleates assembly of the head domain of the 30S subunit. Is located at the subunit interface close to the decoding center, probably blocks exit of the E-site tRNA. The polypeptide is Small ribosomal subunit protein uS7 (Clavibacter michiganensis subsp. michiganensis (strain NCPPB 382)).